We begin with the raw amino-acid sequence, 950 residues long: Translation initiation factor IF-2 (950 aa).

Disordered regions lie at residues 57–254 and 304–328; these read LAER…AVVI and DVSR…KSLS. Low complexity-rich tracts occupy residues 101-131 and 139-169; these read AEPQ…EPAA and AAPL…QPAA. Residues 170–215 show a composition bias toward pro residues; that stretch reads PAAPPAPTAQPSAPPPAAAQPRPPQPSAPSRPPPPGYRPAPPPGAR. Low complexity predominate over residues 216-233; sequence PPVSAAPGAPGQPGAAGQ. A tr-type G domain is found at 449-618; the sequence is IRPPVVTVMG…ALQSEVLELK (170 aa). The interval 458–465 is G1; the sequence is GHVDHGKT. 458–465 provides a ligand contact to GTP; the sequence is GHVDHGKT. Residues 483–487 are G2; sequence GITQH. Residues 504–507 form a G3 region; the sequence is DTPG. GTP contacts are provided by residues 504 to 508 and 558 to 561; these read DTPGH and NKVD. The G4 stretch occupies residues 558-561; the sequence is NKVD. The G5 stretch occupies residues 594-596; it reads SAR.

Belongs to the TRAFAC class translation factor GTPase superfamily. Classic translation factor GTPase family. IF-2 subfamily.

Its subcellular location is the cytoplasm. Functionally, one of the essential components for the initiation of protein synthesis. Protects formylmethionyl-tRNA from spontaneous hydrolysis and promotes its binding to the 30S ribosomal subunits. Also involved in the hydrolysis of GTP during the formation of the 70S ribosomal complex. The sequence is that of Translation initiation factor IF-2 from Anaeromyxobacter dehalogenans (strain 2CP-C).